The following is a 366-amino-acid chain: Histidinol-phosphate aminotransferase (366 aa).

At Lys-228 the chain carries N6-(pyridoxal phosphate)lysine.

It belongs to the class-II pyridoxal-phosphate-dependent aminotransferase family. Histidinol-phosphate aminotransferase subfamily. In terms of assembly, homodimer. Requires pyridoxal 5'-phosphate as cofactor.

The enzyme catalyses L-histidinol phosphate + 2-oxoglutarate = 3-(imidazol-4-yl)-2-oxopropyl phosphate + L-glutamate. It participates in amino-acid biosynthesis; L-histidine biosynthesis; L-histidine from 5-phospho-alpha-D-ribose 1-diphosphate: step 7/9. This Campylobacter fetus subsp. fetus (strain 82-40) protein is Histidinol-phosphate aminotransferase.